Here is a 319-residue protein sequence, read N- to C-terminus: Cytochrome c biogenesis protein CcsA (319 aa).

7 helical membrane-spanning segments follow: residues 9–29 (ILTH…LITL), 44–64 (GMIV…ASSG), 68–88 (LSNL…LHTI), 143–163 (MLLS…ILII), 223–243 (VISL…VWAN), 257–271 (TWAF…IYLH), and 286–306 (VASI…LLGI).

It belongs to the CcmF/CycK/Ccl1/NrfE/CcsA family. As to quaternary structure, may interact with Ccs1.

It is found in the plastid. The protein resides in the chloroplast thylakoid membrane. Functionally, required during biogenesis of c-type cytochromes (cytochrome c6 and cytochrome f) at the step of heme attachment. The sequence is that of Cytochrome c biogenesis protein CcsA from Agrostis stolonifera (Creeping bentgrass).